A 596-amino-acid chain; its full sequence is Aspartate--tRNA(Asp/Asn) ligase (596 aa).

E172 provides a ligand contact to L-aspartate. The aspartate stretch occupies residues 196–199 (QLFK). An L-aspartate-binding site is contributed by R218. Residues 218–220 (RDE) and Q227 each bind ATP. Residue H455 participates in L-aspartate binding. E489 serves as a coordination point for ATP. L-aspartate is bound at residue R496. 541 to 544 (GLDR) contacts ATP.

Belongs to the class-II aminoacyl-tRNA synthetase family. Type 1 subfamily. As to quaternary structure, homodimer.

It is found in the cytoplasm. The catalysed reaction is tRNA(Asx) + L-aspartate + ATP = L-aspartyl-tRNA(Asx) + AMP + diphosphate. Functionally, aspartyl-tRNA synthetase with relaxed tRNA specificity since it is able to aspartylate not only its cognate tRNA(Asp) but also tRNA(Asn). Reaction proceeds in two steps: L-aspartate is first activated by ATP to form Asp-AMP and then transferred to the acceptor end of tRNA(Asp/Asn). The protein is Aspartate--tRNA(Asp/Asn) ligase of Bordetella avium (strain 197N).